Consider the following 242-residue polypeptide: Uroporphyrinogen-III C-methyltransferase (242 aa).

S-adenosyl-L-homocysteine-binding positions include P12, 88–90 (GGD), 118–119 (TS), and M170.

This sequence belongs to the precorrin methyltransferase family. Homodimer.

The catalysed reaction is uroporphyrinogen III + 2 S-adenosyl-L-methionine = precorrin-2 + 2 S-adenosyl-L-homocysteine + H(+). Its pathway is cofactor biosynthesis; adenosylcobalamin biosynthesis; precorrin-2 from uroporphyrinogen III: step 1/1. In terms of biological role, catalyzes the two successive C-2 and C-7 methylation reactions involved in the conversion of uroporphyrinogen III to precorrin-2 via the intermediate formation of precorrin-1. It is a step in the biosynthesis of both cobalamin (vitamin B12) and coenzyme F430. The sequence is that of Uroporphyrinogen-III C-methyltransferase (cobA) from Methanocaldococcus jannaschii (strain ATCC 43067 / DSM 2661 / JAL-1 / JCM 10045 / NBRC 100440) (Methanococcus jannaschii).